Here is an 883-residue protein sequence, read N- to C-terminus: Serine/threonine-protein kinase greatwall (883 aa).

Residue Met1 is modified to N-acetylmethionine. The tract at residues 1–23 (MEPTMGGEMESGGGAATGECVNR) is disordered. A Protein kinase domain is found at 35–839 (FTIVKPISRG…MKELKHHPLF (805 aa)). ATP contacts are provided by residues 41–49 (ISRGAFGKV) and Lys62. The Proton acceptor role is filled by Asp156. Residues Thr209 and Thr224 each carry the phosphothreonine modification. Ser295 bears the Phosphoserine mark. Positions 298–317 (RLATSSTSSPSHTFISSMES) are disordered. The segment covering 301–314 (TSSTSSPSHTFISS) has biased composition (low complexity). A phosphoserine mark is found at Ser373 and Ser456. Residues 511–530 (ENVGSSFTDKHQTPEKSPVP) form a disordered region. Thr523 carries the phosphothreonine modification. Phosphoserine is present on residues Ser556 and Ser560. The disordered stretch occupies residues 569–597 (IHMDSDSSFPGISIMESPLGGQSLDPDKN). Residues Ser635, Ser661, and Ser672 each carry the phosphoserine modification. Positions 706–737 (RSDMPYQQTPNQVKSETPYRTPKSVRRGAAPV) are disordered. The segment covering 710–720 (PYQQTPNQVKS) has biased composition (polar residues). Thr726 is subject to Phosphothreonine. Ser729 carries the phosphoserine modification. Position 745 is a phosphothreonine; by CDK1 (Thr745). An AGC-kinase C-terminal domain is found at 840 to 883 (SGVDWENLQHQKMPFIPQPDDETDTSYFEARNNAQHLTVSGFSL). A phosphoserine mark is found at Ser879 and Ser882.

It belongs to the protein kinase superfamily. AGC Ser/Thr protein kinase family. Post-translationally, phosphorylation at Thr-745 by CDK1 during M phase activates its kinase activity. Maximum phosphorylation occurs in prometaphase.

The protein localises to the cytoplasm. It is found in the cytoskeleton. It localises to the microtubule organizing center. The protein resides in the centrosome. Its subcellular location is the nucleus. The enzyme catalyses L-seryl-[protein] + ATP = O-phospho-L-seryl-[protein] + ADP + H(+). It catalyses the reaction L-threonyl-[protein] + ATP = O-phospho-L-threonyl-[protein] + ADP + H(+). Serine/threonine kinase that plays a key role in M phase by acting as a regulator of mitosis entry and maintenance. Acts by promoting the inactivation of protein phosphatase 2A (PP2A) during M phase: does not directly inhibit PP2A but acts by mediating phosphorylation and subsequent activation of ARPP19 and ENSA at 'Ser-62' and 'Ser-67', respectively. ARPP19 and ENSA are phosphatase inhibitors that specifically inhibit the PPP2R2D (PR55-delta) subunit of PP2A. Inactivation of PP2A during M phase is essential to keep cyclin-B1-CDK1 activity high. Following DNA damage, it is also involved in checkpoint recovery by being inhibited. This chain is Serine/threonine-protein kinase greatwall (MASTL), found in Bos taurus (Bovine).